The sequence spans 157 residues: Endoribonuclease YbeY (157 aa).

His-116, His-120, and His-126 together coordinate Zn(2+).

This sequence belongs to the endoribonuclease YbeY family. It depends on Zn(2+) as a cofactor.

The protein localises to the cytoplasm. Its function is as follows. Single strand-specific metallo-endoribonuclease involved in late-stage 70S ribosome quality control and in maturation of the 3' terminus of the 16S rRNA. This chain is Endoribonuclease YbeY, found in Arthrobacter sp. (strain FB24).